A 156-amino-acid polypeptide reads, in one-letter code: Arginine repressor (156 aa).

It belongs to the ArgR family.

It localises to the cytoplasm. Its pathway is amino-acid biosynthesis; L-arginine biosynthesis [regulation]. Regulates arginine biosynthesis genes. The sequence is that of Arginine repressor from Shewanella baltica (strain OS223).